The primary structure comprises 256 residues: Acetyl-coenzyme A carboxylase carboxyl transferase subunit alpha (256 aa).

One can recognise a CoA carboxyltransferase C-terminal domain in the interval 1–236 (MTKITRIVRE…KQELLVELEQ (236 aa)).

Belongs to the AccA family. As to quaternary structure, acetyl-CoA carboxylase is a heterohexamer composed of biotin carboxyl carrier protein (AccB), biotin carboxylase (AccC) and two subunits each of ACCase subunit alpha (AccA) and ACCase subunit beta (AccD).

It is found in the cytoplasm. It carries out the reaction N(6)-carboxybiotinyl-L-lysyl-[protein] + acetyl-CoA = N(6)-biotinyl-L-lysyl-[protein] + malonyl-CoA. It functions in the pathway lipid metabolism; malonyl-CoA biosynthesis; malonyl-CoA from acetyl-CoA: step 1/1. Its function is as follows. Component of the acetyl coenzyme A carboxylase (ACC) complex. First, biotin carboxylase catalyzes the carboxylation of biotin on its carrier protein (BCCP) and then the CO(2) group is transferred by the carboxyltransferase to acetyl-CoA to form malonyl-CoA. This chain is Acetyl-coenzyme A carboxylase carboxyl transferase subunit alpha, found in Streptococcus gordonii (strain Challis / ATCC 35105 / BCRC 15272 / CH1 / DL1 / V288).